The sequence spans 763 residues: MERGGGGGFGTGSRPEGTARGTCLPGKIAEPGAVRTSQPNYRPQGMEGFLKSGERQRLAKERREEREKCLAAREQQILEKQKRAKLQYEKQMEERWRKLEEQRQREDQKRAAVEEKRKQKLREEEERLEAMMRRSLERTQQLELKKKYSWGAPLAIGPGGHDGESENTPPPPLGLAASTLPPDAGTTAAAAESTNACDKLSTSTMSLPKPTEPPMSKRLSSSTVAISYSPDRAPLGPLNPSYKSSPTRNIEKKKATSTSTSGAGDVGKEALAGGEASLVEKVKRGQRTATSLPVVNFGSPLRRCEFSGGIPKRPSSPVISKTATKAYPQSPKTTKPPYPGSPVKYRLPALSGQDMPKRKAEKEKSNKEREGTLAQQAAGPQGEDALEKHVVDKHASEKHAAATGGKAENSAALGKPTAGTTDAGEAAKILAEKRRQARLQKEQEEQERLEKEEQDRLEREELKRKAEEERLRLEEEARKQEEERKRQEEEKKKQEEEEKREAGEEAKRKAEEELLLKEKQEQEKPEKEKQEKAMIEKQKEAAEAKAREVAEQMRLEREQIMLQIEQERLERKKRIDEIMKRTRKSDVSPQVKKEDPKMGVQPAVCVEKKTKLVVPNKMEINGLNTCQEINGVDHAAPETYPQDIFSNGLKPAGGLIHLDALDGKSNSLDDSTEEVQSMDVSPVSKEELISIPEFSPVSEMIPGVPLDQNGTGNARALQDLLDFTGPPTFPKRSSENLSLDDCNKNLIEGFNSPGQETPLNTFC.

Residues methionine 1 to threonine 11 are compositionally biased toward gly residues. Disordered stretches follow at residues methionine 1–arginine 63, tryptophan 96–glutamate 124, serine 149–lysine 268, and proline 300–glutamate 540. The segment covering serine 52 to arginine 63 has biased composition (basic and acidic residues). Residues glutamate 54–lysine 147 are a coiled coil. A compositionally biased stretch (polar residues) spans glutamate 192–serine 206. Basic and acidic residues-rich tracts occupy residues methionine 355–glycine 371, alanine 385–alanine 400, and leucine 430–glutamate 540.

This sequence belongs to the MAP7 family. In terms of assembly, interacts (via N-terminus) with microtubules; facilitates microtubule stabilization. Interacts with kinesin-1 family members, KIF5A, KIF5B and KIF5C.

The protein localises to the cytoplasm. It is found in the cytoskeleton. Its subcellular location is the microtubule organizing center. The protein resides in the centrosome. It localises to the midbody. The protein localises to the cell projection. It is found in the neuron projection. Its subcellular location is the axon. In terms of biological role, microtubule-stabilizing protein involved in the control of cell motility and neurite outgrowth. Acts as a critical cofactor for kinesin transport; in the proximal axon regulates kinesin-1 family members, KIF5A, KIF5B and KIF5C recruitment to microtubules and contributes to kinesin-1-mediated transport in the axons. The sequence is that of MAP7 domain-containing protein 2 (MAP7D2) from Pongo abelii (Sumatran orangutan).